The following is a 129-amino-acid chain: Small ribosomal subunit protein uS8 (129 aa).

It belongs to the universal ribosomal protein uS8 family. As to quaternary structure, part of the 30S ribosomal subunit.

In terms of biological role, one of the primary rRNA binding proteins, it binds directly to 16S rRNA central domain where it helps coordinate assembly of the platform of the 30S subunit. The protein is Small ribosomal subunit protein uS8 of Thermoplasma volcanium (strain ATCC 51530 / DSM 4299 / JCM 9571 / NBRC 15438 / GSS1).